The chain runs to 202 residues: Superoxide dismutase [Mn/Fe] (202 aa).

Fe(3+) contacts are provided by H26, H80, D163, and H167. Mn(2+)-binding residues include H26, H80, D163, and H167.

The protein belongs to the iron/manganese superoxide dismutase family. In terms of assembly, homodimer. The cofactor is Mn(2+). Fe(3+) serves as cofactor.

The catalysed reaction is 2 superoxide + 2 H(+) = H2O2 + O2. Functionally, destroys superoxide anion radicals which are normally produced within the cells and which are toxic to biological systems. Catalyzes the dismutation of superoxide anion radicals into O2 and H2O2 by successive reduction and oxidation of the transition metal ion at the active site. This chain is Superoxide dismutase [Mn/Fe] (sodB), found in Methylomonas sp. (strain J).